A 130-amino-acid polypeptide reads, in one-letter code: MSKDFNYATGRRKNAVARTRLYEGTGAITVNGKPYEDYFPRKTLQMIVQQPLKLTKTLGKFDIKVNADGGGVAGQAQAVRHGISRALIEIDPELRSILKRAGLLTRDARKKERKKYGQPGARAKFQYSKR.

The tract at residues R109–R130 is disordered.

Belongs to the universal ribosomal protein uS9 family.

In Maridesulfovibrio salexigens (strain ATCC 14822 / DSM 2638 / NCIMB 8403 / VKM B-1763) (Desulfovibrio salexigens), this protein is Small ribosomal subunit protein uS9.